Consider the following 702-residue polypeptide: 1,4-alpha-glucan-branching enzyme (702 aa).

Position 2 is an N-acetylalanine (Ala2). Substrate-binding positions include 62–63 (NE) and 91–93 (WAP). Trp107 is a binding site for (1,4-alpha-D-glucosyl)n. 118 to 121 (EYGK) contacts substrate. Lys143 contacts (1,4-alpha-D-glucosyl)n. At Tyr173 the chain carries Phosphotyrosine. Residue 333-336 (EVLR) coordinates substrate. The active-site Nucleophile is Asp357. The active-site Proton donor is the Glu412.

This sequence belongs to the glycosyl hydrolase 13 family. GlgB subfamily. Monomer.

The enzyme catalyses Transfers a segment of a (1-&gt;4)-alpha-D-glucan chain to a primary hydroxy group in a similar glucan chain.. It participates in glycan biosynthesis; glycogen biosynthesis. Its function is as follows. Glycogen-branching enzyme participates in the glycogen biosynthetic process along with glycogenin and glycogen synthase. Generates alpha-1,6-glucosidic branches from alpha-1,4-linked glucose chains, to increase solubility of the glycogen polymer. The polypeptide is 1,4-alpha-glucan-branching enzyme (Gbe1) (Mus musculus (Mouse)).